A 105-amino-acid chain; its full sequence is Large ribosomal subunit protein uL24 (105 aa).

It belongs to the universal ribosomal protein uL24 family. Part of the 50S ribosomal subunit.

Its function is as follows. One of two assembly initiator proteins, it binds directly to the 5'-end of the 23S rRNA, where it nucleates assembly of the 50S subunit. One of the proteins that surrounds the polypeptide exit tunnel on the outside of the subunit. The protein is Large ribosomal subunit protein uL24 of Rhizorhabdus wittichii (strain DSM 6014 / CCUG 31198 / JCM 15750 / NBRC 105917 / EY 4224 / RW1) (Sphingomonas wittichii).